The chain runs to 503 residues: GMP synthase [glutamine-hydrolyzing] (503 aa).

Residues 1 to 178 enclose the Glutamine amidotransferase type-1 domain; it reads MREANVYSEI…LHRAAGIPAD (178 aa). Catalysis depends on Cys-60, which acts as the Nucleophile. Residues His-152 and Glu-154 contribute to the active site. A GMPS ATP-PPase domain is found at 179 to 377; that stretch reads WNSGNVIADQ…LGLPEVIVGR (199 aa). An ATP-binding site is contributed by 206–212; the sequence is SGGVDSA.

Homodimer.

It catalyses the reaction XMP + L-glutamine + ATP + H2O = GMP + L-glutamate + AMP + diphosphate + 2 H(+). Its pathway is purine metabolism; GMP biosynthesis; GMP from XMP (L-Gln route): step 1/1. Its function is as follows. Catalyzes the synthesis of GMP from XMP. This is GMP synthase [glutamine-hydrolyzing] from Leifsonia xyli subsp. xyli (strain CTCB07).